The primary structure comprises 676 residues: Translation initiation factor IF-2, mitochondrial (676 aa).

The tr-type G domain maps to 143–326 (KRAPVVTIMG…MDIRAENSPK (184 aa)). The tract at residues 152-159 (GHVDHGKT) is G1. GTP is bound at residue 152-159 (GHVDHGKT). The tract at residues 177 to 181 (GITQH) is G2. Residues 200–203 (DTPG) and 254–257 (TKID) contribute to the GTP site. The tract at residues 200-203 (DTPG) is G3. The tract at residues 254 to 257 (TKID) is G4. The segment at 296–298 (SAK) is G5.

It belongs to the TRAFAC class translation factor GTPase superfamily. Classic translation factor GTPase family. IF-2 subfamily.

Its subcellular location is the mitochondrion. In terms of biological role, one of the essential components for the initiation of protein synthesis. Protects formylmethionyl-tRNA from spontaneous hydrolysis and promotes its binding to the 30S ribosomal subunits. Also involved in the hydrolysis of GTP during the formation of the 70S ribosomal complex. This is Translation initiation factor IF-2, mitochondrial (IFM1) from Saccharomyces cerevisiae (strain ATCC 204508 / S288c) (Baker's yeast).